Reading from the N-terminus, the 109-residue chain is Ferredoxin (109 aa).

4Fe-4S ferredoxin-type domains follow at residues 2–30 (TYVVTDECVKCKYTDCVEVCPVDCFYEGE) and 31–60 (FMLVINPDECIDCGVCVPDCPIDAIKPESP). [3Fe-4S] cluster contacts are provided by cysteine 9 and cysteine 17. [4Fe-4S] cluster contacts are provided by cysteine 21, cysteine 40, cysteine 43, and cysteine 46. Residue cysteine 50 coordinates [3Fe-4S] cluster.

It depends on [4Fe-4S] cluster as a cofactor. [3Fe-4S] cluster serves as cofactor.

In terms of biological role, ferredoxins are iron-sulfur proteins that transfer electrons in a wide variety of metabolic reactions. This is Ferredoxin (fdxA) from Rickettsia prowazekii (strain Madrid E).